Here is a 240-residue protein sequence, read N- to C-terminus: Phosphoenolpyruvate guanylyltransferase (240 aa).

The phosphoenolpyruvate site is built by Thr-161, Gly-178, and Ser-181.

Belongs to the CofC family.

It carries out the reaction phosphoenolpyruvate + GTP + H(+) = enolpyruvoyl-2-diphospho-5'-guanosine + diphosphate. The protein operates within cofactor biosynthesis; coenzyme F420 biosynthesis. Its function is as follows. Guanylyltransferase that catalyzes the activation of phosphoenolpyruvate (PEP) as enolpyruvoyl-2-diphospho-5'-guanosine, via the condensation of PEP with GTP. It is involved in the biosynthesis of coenzyme F420, a hydride carrier cofactor. This Rhodococcus opacus (strain B4) protein is Phosphoenolpyruvate guanylyltransferase.